A 428-amino-acid chain; its full sequence is Cell division protein DamX (428 aa).

Positions 1-99 (MDEFKPEDEL…KRKKAASKPA (99 aa)) are disordered. The Cytoplasmic portion of the chain corresponds to 1–103 (MDEFKPEDEL…AASKPASRQY (103 aa)). Composition is skewed to basic and acidic residues over residues 7 to 36 (EDEL…ERGE) and 50 to 64 (DDRR…RNEE). Positions 55–87 (TRAQKERNEEPEIEEEIDESEDETVDEERVERR) form a coiled coil. Over residues 65–82 (PEIEEEIDESEDETVDEE) the composition is skewed to acidic residues. A compositionally biased stretch (basic residues) spans 86–95 (RRPRKRKKAA). Residues 104–124 (MMMGVGILVLLLLIIGIGSAL) form a helical membrane-spanning segment. At 125 to 428 (KAPSTTSSDQ…PLRQVQADLK (304 aa)) the chain is on the periplasmic side. Disordered stretches follow at residues 149–190 (TDQA…VATD) and 226–344 (EPAT…KSAP). Residues 236 to 257 (GNASRDTAKTQTAERPSTTRPA) show a composition bias toward polar residues. Over residues 288 to 334 (PAAPVASTKAPAATSTPAPKETATTAPVQTASPAQTTATPAAGAKTA) the composition is skewed to low complexity. One can recognise an SPOR domain in the interval 342–419 (SAPSSHYTLQ…VQAKNPWAKP (78 aa)).

It belongs to the DamX family. Interacts in vitro with multiple Fts proteins, including FtsQ and FtsN.

The protein resides in the cell inner membrane. In terms of biological role, non-essential cell division protein. The sequence is that of Cell division protein DamX from Escherichia coli (strain K12).